Consider the following 498-residue polypeptide: Cytochrome P450 71B31 (498 aa).

The chain crosses the membrane as a helical span at residues 3-23 (MFLGLLFLFPLFFILFKNLLP). C441 is a heme binding site.

This sequence belongs to the cytochrome P450 family. It depends on heme as a cofactor.

Its subcellular location is the membrane. This Arabidopsis thaliana (Mouse-ear cress) protein is Cytochrome P450 71B31 (CYP71B31).